The primary structure comprises 436 residues: Glutamate-1-semialdehyde 2,1-aminomutase (436 aa).

At K270 the chain carries N6-(pyridoxal phosphate)lysine.

It belongs to the class-III pyridoxal-phosphate-dependent aminotransferase family. HemL subfamily. In terms of assembly, homodimer. It depends on pyridoxal 5'-phosphate as a cofactor.

The protein localises to the cytoplasm. It carries out the reaction (S)-4-amino-5-oxopentanoate = 5-aminolevulinate. The protein operates within porphyrin-containing compound metabolism; protoporphyrin-IX biosynthesis; 5-aminolevulinate from L-glutamyl-tRNA(Glu): step 2/2. The protein is Glutamate-1-semialdehyde 2,1-aminomutase of Cutibacterium acnes (strain DSM 16379 / KPA171202) (Propionibacterium acnes).